A 248-amino-acid chain; its full sequence is tRNA pseudouridine synthase A (248 aa).

The active-site Nucleophile is the aspartate 53. Tyrosine 111 contributes to the substrate binding site.

It belongs to the tRNA pseudouridine synthase TruA family. Homodimer.

The catalysed reaction is uridine(38/39/40) in tRNA = pseudouridine(38/39/40) in tRNA. Functionally, formation of pseudouridine at positions 38, 39 and 40 in the anticodon stem and loop of transfer RNAs. This Streptococcus thermophilus (strain ATCC BAA-491 / LMD-9) protein is tRNA pseudouridine synthase A.